Here is a 759-residue protein sequence, read N- to C-terminus: Fidgetin (759 aa).

4 disordered regions span residues 89–111 (SNYSDTPSGLVNGRKNDSEPWQP), 200–237 (SQATPALPSPHPSPLHSSGLLQPPPPPPPPPALVPGYN), 258–293 (VGSGYSPGGAPPPPSAYLPSGIPAPTPLPPTTVPGY), and 337–429 (SYGQ…VMSE). Composition is skewed to pro residues over residues 221 to 232 (QPPPPPPPPPAL) and 266 to 289 (GAPPPPSAYLPSGIPAPTPLPPTT). Polar residues-rich tracts occupy residues 337–347 (SYGQQRSTQSP) and 382–418 (LMPSEQQRKFSSQSSRALTPPSYSTAKNSLGSRSSES). At threonine 400 the chain carries Phosphothreonine. Residues alanine 489 and 529–534 (GTGKTL) contribute to the ATP site.

Belongs to the AAA ATPase family. As to quaternary structure, interacts with AKAP8 (via C-terminus). Widely expressed.

It localises to the nucleus matrix. The protein localises to the cytoplasm. It is found in the cytoskeleton. The protein resides in the microtubule organizing center. Its subcellular location is the centrosome. ATP-dependent microtubule severing protein. Severs microtubules along their length and depolymerizes their ends, primarily the minus-end, suppressing microtubule growth from and attachment to centrosomes. Microtubule severing may promote rapid reorganization of cellular microtubule arrays and the release of microtubules from the centrosome following nucleation. Microtubule release from the mitotic spindle poles may allow depolymerization of the microtubule end proximal to the spindle pole, leading to poleward microtubule flux and poleward motion of chromosome. The chain is Fidgetin (Fign) from Mus musculus (Mouse).